Consider the following 114-residue polypeptide: T cell receptor beta variable 4-2 (114 aa).

Residues 1–21 form the signal peptide; it reads MGCRLLCCAVLCLLGAVPMET. The 93-residue stretch at 22 to 114 folds into the Ig-like domain; the sequence is GVTQTPRHLV…SALYLCASSQ (93 aa). A disulfide bridge links Cys-42 with Cys-110. Asn-76 and Asn-89 each carry an N-linked (GlcNAc...) asparagine glycan.

As to quaternary structure, alpha-beta TR is a heterodimer composed of an alpha and beta chain; disulfide-linked. The alpha-beta TR is associated with the transmembrane signaling CD3 coreceptor proteins to form the TR-CD3 (TcR or TCR). The assembly of alpha-beta TR heterodimers with CD3 occurs in the endoplasmic reticulum where a single alpha-beta TR heterodimer associates with one CD3D-CD3E heterodimer, one CD3G-CD3E heterodimer and one CD247 homodimer forming a stable octameric structure. CD3D-CD3E and CD3G-CD3E heterodimers preferentially associate with TR alpha and TR beta chains, respectively. The association of the CD247 homodimer is the last step of TcR assembly in the endoplasmic reticulum and is required for transport to the cell surface.

The protein localises to the cell membrane. Functionally, v region of the variable domain of T cell receptor (TR) beta chain that participates in the antigen recognition. Alpha-beta T cell receptors are antigen specific receptors which are essential to the immune response and are present on the cell surface of T lymphocytes. Recognize peptide-major histocompatibility (MH) (pMH) complexes that are displayed by antigen presenting cells (APC), a prerequisite for efficient T cell adaptive immunity against pathogens. Binding of alpha-beta TR to pMH complex initiates TR-CD3 clustering on the cell surface and intracellular activation of LCK that phosphorylates the ITAM motifs of CD3G, CD3D, CD3E and CD247 enabling the recruitment of ZAP70. In turn ZAP70 phosphorylates LAT, which recruits numerous signaling molecules to form the LAT signalosome. The LAT signalosome propagates signal branching to three major signaling pathways, the calcium, the mitogen-activated protein kinase (MAPK) kinase and the nuclear factor NF-kappa-B (NF-kB) pathways, leading to the mobilization of transcription factors that are critical for gene expression and essential for T cell growth and differentiation. The T cell repertoire is generated in the thymus, by V-(D)-J rearrangement. This repertoire is then shaped by intrathymic selection events to generate a peripheral T cell pool of self-MH restricted, non-autoaggressive T cells. Post-thymic interaction of alpha-beta TR with the pMH complexes shapes TR structural and functional avidity. The sequence is that of T cell receptor beta variable 4-2 from Homo sapiens (Human).